We begin with the raw amino-acid sequence, 673 residues long: UvrABC system protein B (673 aa).

One can recognise a Helicase ATP-binding domain in the interval 26–183 (ANFEAGLAKQ…RHLTDLQYTR (158 aa)). 39–46 (GVTGSGKT) is an ATP binding site. The Beta-hairpin motif lies at 92–115 (YYDYYQPEAYVPSSDTFIEKDSSI). The Helicase C-terminal domain maps to 431 to 597 (QVDDLMSEIH…SVERPISDIM (167 aa)). Residues 601-631 (REDAAEKKSGKGRSKSRQVAEETPDYRAMKP) are disordered. Basic and acidic residues predominate over residues 618–630 (QVAEETPDYRAMK). The UVR domain maps to 635–670 (AGKLKSLEQKMYQHAKDLEFEAAAQIRDQIQKLKTA).

This sequence belongs to the UvrB family. Forms a heterotetramer with UvrA during the search for lesions. Interacts with UvrC in an incision complex.

The protein resides in the cytoplasm. Functionally, the UvrABC repair system catalyzes the recognition and processing of DNA lesions. A damage recognition complex composed of 2 UvrA and 2 UvrB subunits scans DNA for abnormalities. Upon binding of the UvrA(2)B(2) complex to a putative damaged site, the DNA wraps around one UvrB monomer. DNA wrap is dependent on ATP binding by UvrB and probably causes local melting of the DNA helix, facilitating insertion of UvrB beta-hairpin between the DNA strands. Then UvrB probes one DNA strand for the presence of a lesion. If a lesion is found the UvrA subunits dissociate and the UvrB-DNA preincision complex is formed. This complex is subsequently bound by UvrC and the second UvrB is released. If no lesion is found, the DNA wraps around the other UvrB subunit that will check the other stand for damage. The protein is UvrABC system protein B of Xanthomonas oryzae pv. oryzae (strain MAFF 311018).